The chain runs to 20 residues: Hemoglobinase-like protein 1 (20 aa).

The protein belongs to the peptidase C13 family.

It catalyses the reaction Hydrolysis of proteins and small molecule substrates at -Asn-|-Xaa- bonds.. The sequence is that of Hemoglobinase-like protein 1 from Fasciola hepatica (Liver fluke).